The following is a 39-amino-acid chain: MKLKSKLLLSCLALSTVFVATTIANAPTHQIEVAQRGMI.

Residues 1 to 34 (MKLKSKLLLSCLALSTVFVATTIANAPTHQIEVA) constitute a propeptide that is removed on maturation.

This sequence belongs to the Phr family. In terms of assembly, interacts with RapF and inhibits its interaction with ComA. Post-translationally, contains a predicted signal peptide cleavage site in the N-terminal region, however the propeptide is probably subject to only one processing event, at the N-terminal end of the mature peptide.

The protein localises to the secreted. The protein resides in the cytoplasm. Signaling molecule involved in the regulation of genetic competence development. Secreted during production, but the mature peptide acts intracellularly, indicating that it needs to be imported into the cell to function. Stimulates expression of the genes controlled by ComA, a transcriptional factor that regulates the development of genetic competence. Acts by inhibiting RapF, which regulates the activity of ComA. The sequence is that of RapF inhibitor (phrF) from Bacillus subtilis (strain 168).